The sequence spans 186 residues: UPF0397 protein SGO_0469 (186 aa).

5 consecutive transmembrane segments (helical) span residues 14 to 34 (VVAT…SIPT), 50 to 70 (LFGV…GHAL), 77 to 97 (GNPW…VGLL), 119 to 139 (AQFV…DILI), and 152 to 172 (VVAT…LLIA).

It belongs to the UPF0397 family.

It localises to the cell membrane. This Streptococcus gordonii (strain Challis / ATCC 35105 / BCRC 15272 / CH1 / DL1 / V288) protein is UPF0397 protein SGO_0469.